The sequence spans 513 residues: ATP synthase subunit alpha (513 aa).

Residue 169–176 (GDRQTGKT) participates in ATP binding.

It belongs to the ATPase alpha/beta chains family. In terms of assembly, F-type ATPases have 2 components, CF(1) - the catalytic core - and CF(0) - the membrane proton channel. CF(1) has five subunits: alpha(3), beta(3), gamma(1), delta(1), epsilon(1). CF(0) has three main subunits: a(1), b(2) and c(9-12). The alpha and beta chains form an alternating ring which encloses part of the gamma chain. CF(1) is attached to CF(0) by a central stalk formed by the gamma and epsilon chains, while a peripheral stalk is formed by the delta and b chains.

It localises to the cell inner membrane. It carries out the reaction ATP + H2O + 4 H(+)(in) = ADP + phosphate + 5 H(+)(out). Produces ATP from ADP in the presence of a proton gradient across the membrane. The alpha chain is a regulatory subunit. This chain is ATP synthase subunit alpha, found in Hydrogenovibrio crunogenus (strain DSM 25203 / XCL-2) (Thiomicrospira crunogena).